The primary structure comprises 247 residues: 6-carboxyhexanoate--CoA ligase (247 aa).

It belongs to the BioW family. In terms of assembly, homodimer. The cofactor is Mg(2+).

The catalysed reaction is heptanedioate + ATP + CoA = 6-carboxyhexanoyl-CoA + AMP + diphosphate. Its pathway is metabolic intermediate metabolism; pimeloyl-CoA biosynthesis; pimeloyl-CoA from pimelate: step 1/1. Its function is as follows. Catalyzes the transformation of pimelate into pimeloyl-CoA with concomitant hydrolysis of ATP to AMP. This Corynebacterium diphtheriae (strain ATCC 700971 / NCTC 13129 / Biotype gravis) protein is 6-carboxyhexanoate--CoA ligase.